The sequence spans 546 residues: CTP synthase (546 aa).

An amidoligase domain region spans residues 1-267; it reads MTKFIFVTGG…AEQVLDILQL (267 aa). Residue S13 participates in CTP binding. A UTP-binding site is contributed by S13. 14–19 lines the ATP pocket; sequence SIGKGI. Position 54 (Y54) interacts with L-glutamine. D71 contacts ATP. D71 and E141 together coordinate Mg(2+). CTP contacts are provided by residues 148–150, 188–193, and K224; these read DIE and KTKPTQ. Residues 188-193 and K224 contribute to the UTP site; that span reads KTKPTQ. Positions 292–534 constitute a Glutamine amidotransferase type-1 domain; the sequence is EVAIVGKYVR…IKAALGSDLT (243 aa). An L-glutamine-binding site is contributed by G354. C381 serves as the catalytic Nucleophile; for glutamine hydrolysis. L-glutamine is bound by residues 382–385, E405, and R462; that span reads LGMQ. Catalysis depends on residues H507 and E509.

This sequence belongs to the CTP synthase family. Homotetramer.

It catalyses the reaction UTP + L-glutamine + ATP + H2O = CTP + L-glutamate + ADP + phosphate + 2 H(+). It carries out the reaction L-glutamine + H2O = L-glutamate + NH4(+). The enzyme catalyses UTP + NH4(+) + ATP = CTP + ADP + phosphate + 2 H(+). It functions in the pathway pyrimidine metabolism; CTP biosynthesis via de novo pathway; CTP from UDP: step 2/2. With respect to regulation, allosterically activated by GTP, when glutamine is the substrate; GTP has no effect on the reaction when ammonia is the substrate. The allosteric effector GTP functions by stabilizing the protein conformation that binds the tetrahedral intermediate(s) formed during glutamine hydrolysis. Inhibited by the product CTP, via allosteric rather than competitive inhibition. In terms of biological role, catalyzes the ATP-dependent amination of UTP to CTP with either L-glutamine or ammonia as the source of nitrogen. Regulates intracellular CTP levels through interactions with the four ribonucleotide triphosphates. The polypeptide is CTP synthase (Synechococcus sp. (strain ATCC 27144 / PCC 6301 / SAUG 1402/1) (Anacystis nidulans)).